Here is a 117-residue protein sequence, read N- to C-terminus: Probable glycerol dehydratase-reactivating factor small subunit (117 aa).

E31 is a binding site for Mg(2+).

Belongs to the DdrB/PduH family. In terms of assembly, member of the GDR complex, probably composed of DhaF(2)/DhaG(2). Mg(2+) serves as cofactor.

Functionally, small subunit of the glycerol dehydratase-reactivating factor (GDR), which reactivates suicidally inhibited adenosylcobalamin-dependent glycerol dehydratase. This Citrobacter freundii protein is Probable glycerol dehydratase-reactivating factor small subunit.